Here is a 212-residue protein sequence, read N- to C-terminus: Uracil phosphoribosyltransferase (212 aa).

Residues Arg-78, Arg-103, and Asp-130–Ser-138 contribute to the 5-phospho-alpha-D-ribose 1-diphosphate site. Uracil is bound by residues Ile-193 and Gly-198–Ala-200. Asp-199 is a 5-phospho-alpha-D-ribose 1-diphosphate binding site.

It belongs to the UPRTase family. The cofactor is Mg(2+).

The enzyme catalyses UMP + diphosphate = 5-phospho-alpha-D-ribose 1-diphosphate + uracil. The protein operates within pyrimidine metabolism; UMP biosynthesis via salvage pathway; UMP from uracil: step 1/1. Allosterically activated by GTP. Its function is as follows. Catalyzes the conversion of uracil and 5-phospho-alpha-D-ribose 1-diphosphate (PRPP) to UMP and diphosphate. In Pseudomonas savastanoi pv. phaseolicola (strain 1448A / Race 6) (Pseudomonas syringae pv. phaseolicola (strain 1448A / Race 6)), this protein is Uracil phosphoribosyltransferase.